The following is a 560-amino-acid chain: Excitatory amino acid transporter 5 (560 aa).

Residues 1-16 (MVPHAILARGRDVCRR) are Cytoplasmic-facing. The next 3 helical transmembrane spans lie at 17–37 (NGLL…GFFL), 60–80 (MLKM…LASL), and 94–114 (AYYL…VSII). At 115 to 216 (HPGSAAQKET…EVVYKSEPGT (102 aa)) the chain is on the extracellular side. N191 is a glycosylation site (N-linked (GlcNAc...) asparagine). 7 helical membrane-spanning segments follow: residues 217 to 237 (SDGM…IMLG), 260 to 280 (IVAV…AGKI), 300 to 320 (VVCG…FFIT), 330 to 350 (GILQ…TLPI), 372 to 392 (VGAT…AIFI), 414 to 434 (AASI…VIVL), and 457 to 477 (FRTM…AHIC).

The protein belongs to the dicarboxylate/amino acid:cation symporter (DAACS) (TC 2.A.23) family. SLC1A7 subfamily. As to quaternary structure, interacts with the PDZ domains of DLG4. As to expression, expressed primarily in retina. Detectable in liver, heart, muscle and brain.

It is found in the photoreceptor inner segment membrane. It localises to the synaptic cell membrane. The enzyme catalyses K(+)(in) + L-glutamate(out) + 3 Na(+)(out) + H(+)(out) = K(+)(out) + L-glutamate(in) + 3 Na(+)(in) + H(+)(in). The catalysed reaction is K(+)(in) + L-aspartate(out) + 3 Na(+)(out) + H(+)(out) = K(+)(out) + L-aspartate(in) + 3 Na(+)(in) + H(+)(in). It catalyses the reaction D-aspartate(out) + K(+)(in) + 3 Na(+)(out) + H(+)(out) = D-aspartate(in) + K(+)(out) + 3 Na(+)(in) + H(+)(in). Functionally, sodium-dependent, high-affinity amino acid transporter that mediates the uptake of L-glutamate and also L-aspartate and D-aspartate. Functions as a symporter that transports one amino acid molecule together with two or three Na(+) ions and one proton, in parallel with the counter-transport of one K(+) ion. Acts primarily as an inhibitory glutamate-gated chloride channel being a major inhibitory presynaptic receptor at mammalian rod bipolar cell axon terminals. Glutamate binding gates a large Cl(-) conductance that mediates inhibition, affecting visual processing in the retina. The protein is Excitatory amino acid transporter 5 of Homo sapiens (Human).